The chain runs to 130 residues: MSMQDPIADMLTRIRNGQAANKVAISMPSSKLKVAIANVLAKEGYVESFRIIEDSKPELEITLKYFQNKPVVESIQRISRPGIRIYKRKDELPKVMGGLGIAIVSTSKGVMTDRAAREEGLGGEIICYVA.

This sequence belongs to the universal ribosomal protein uS8 family. In terms of assembly, part of the 30S ribosomal subunit. Contacts proteins S5 and S12.

In terms of biological role, one of the primary rRNA binding proteins, it binds directly to 16S rRNA central domain where it helps coordinate assembly of the platform of the 30S subunit. The sequence is that of Small ribosomal subunit protein uS8 from Haemophilus ducreyi (strain 35000HP / ATCC 700724).